The sequence spans 298 residues: GTP cyclohydrolase FolE2 (298 aa).

This sequence belongs to the GTP cyclohydrolase IV family.

The catalysed reaction is GTP + H2O = 7,8-dihydroneopterin 3'-triphosphate + formate + H(+). It participates in cofactor biosynthesis; 7,8-dihydroneopterin triphosphate biosynthesis; 7,8-dihydroneopterin triphosphate from GTP: step 1/1. Its function is as follows. Converts GTP to 7,8-dihydroneopterin triphosphate. The chain is GTP cyclohydrolase FolE2 from Neisseria meningitidis serogroup B (strain ATCC BAA-335 / MC58).